The sequence spans 204 residues: MSRGALIVFEGLDKSGKTTQCMNIMESILANTIKYLNFPQRSTVTGKMIDDYLTRKKTYNDHIVNLLFCANRWEFASFIQEQLEQGITLIVDRYAFSGVAYAAAKGASMTLSKSYEFGLPKPDLVIFLESGSKEINKNVGEEIYEDVAFQQKVLQEYKKMIEEGDIHWQIISSEFEEDVKKELIKNIVIEAIHTVTGPVGQLWM.

11–18 (GLDKSGKT) contacts ATP.

It belongs to the thymidylate kinase family.

It carries out the reaction dTMP + ATP = dTDP + ADP. Its pathway is pyrimidine metabolism; dTTP biosynthesis. The sequence is that of Thymidylate kinase (TMK) from Camelus.